The chain runs to 95 residues: Citrate lyase acyl carrier protein (95 aa).

Ser14 is subject to O-(phosphoribosyl dephospho-coenzyme A)serine.

This sequence belongs to the CitD family. Oligomer with a subunit composition of (alpha,beta,gamma)6.

The protein localises to the cytoplasm. Functionally, covalent carrier of the coenzyme of citrate lyase. This Haemophilus influenzae (strain 86-028NP) protein is Citrate lyase acyl carrier protein.